A 117-amino-acid chain; its full sequence is Large ribosomal subunit protein bL19 (117 aa).

It belongs to the bacterial ribosomal protein bL19 family.

Its function is as follows. This protein is located at the 30S-50S ribosomal subunit interface and may play a role in the structure and function of the aminoacyl-tRNA binding site. The chain is Large ribosomal subunit protein bL19 from Azobacteroides pseudotrichonymphae genomovar. CFP2.